Consider the following 76-residue polypeptide: Potassium/proton antiporter CemA (76 aa).

The helical transmembrane segment at 35 to 52 (QILSCLVSIFPVILDTIF) threads the bilayer.

This sequence belongs to the CemA family.

Its subcellular location is the plastid. It is found in the chloroplast inner membrane. The enzyme catalyses K(+)(in) + H(+)(out) = K(+)(out) + H(+)(in). Contributes to K(+)/H(+) antiport activity by supporting proton efflux to control proton extrusion and homeostasis in chloroplasts in a light-dependent manner to modulate photosynthesis. Prevents excessive induction of non-photochemical quenching (NPQ) under continuous-light conditions. Indirectly promotes efficient inorganic carbon uptake into chloroplasts. The polypeptide is Potassium/proton antiporter CemA (Vicia faba (Broad bean)).